A 917-amino-acid polypeptide reads, in one-letter code: Protein translocase subunit SecA (917 aa).

Residues Q87, 105–109 (GEGKT), and D501 each bind ATP. Positions 901, 903, 912, and 913 each coordinate Zn(2+).

The protein belongs to the SecA family. In terms of assembly, monomer and homodimer. Part of the essential Sec protein translocation apparatus which comprises SecA, SecYEG and auxiliary proteins SecDF-YajC and YidC. Zn(2+) serves as cofactor.

The protein localises to the cell inner membrane. The protein resides in the cytoplasm. It carries out the reaction ATP + H2O + cellular proteinSide 1 = ADP + phosphate + cellular proteinSide 2.. Its function is as follows. Part of the Sec protein translocase complex. Interacts with the SecYEG preprotein conducting channel. Has a central role in coupling the hydrolysis of ATP to the transfer of proteins into and across the cell membrane, serving both as a receptor for the preprotein-SecB complex and as an ATP-driven molecular motor driving the stepwise translocation of polypeptide chains across the membrane. This chain is Protein translocase subunit SecA, found in Granulibacter bethesdensis (strain ATCC BAA-1260 / CGDNIH1).